A 159-amino-acid polypeptide reads, in one-letter code: Ribosome maturation factor RimP (159 aa).

Belongs to the RimP family.

Its subcellular location is the cytoplasm. Required for maturation of 30S ribosomal subunits. This Geobacter sulfurreducens (strain ATCC 51573 / DSM 12127 / PCA) protein is Ribosome maturation factor RimP.